Consider the following 194-residue polypeptide: Ion-translocating oxidoreductase complex subunit B (194 aa).

Positions 1–26 (MSSILIAVIAISALALVFGLILGFAS) are hydrophobic. The 59-residue stretch at 32 to 90 (ESDPIVDQIDSILPQTQCGQCGYPGCKPYAEAIANGDTINKCPPGGQATIEKLADLMGV) folds into the 4Fe-4S domain. 12 residues coordinate [4Fe-4S] cluster: Cys-49, Cys-52, Cys-57, Cys-73, Cys-114, Cys-117, Cys-120, Cys-124, Cys-144, Cys-147, Cys-150, and Cys-154. 4Fe-4S ferredoxin-type domains lie at 105–134 (KIAFIHEDMCIGCTKCIQACPVDAIVGGTK) and 135–164 (ALHTVIEAECTGCDLCVAPCPTDCIEMIPV).

The protein belongs to the 4Fe4S bacterial-type ferredoxin family. RnfB subfamily. In terms of assembly, the complex is composed of six subunits: RnfA, RnfB, RnfC, RnfD, RnfE and RnfG. [4Fe-4S] cluster serves as cofactor.

Its subcellular location is the cell inner membrane. Part of a membrane-bound complex that couples electron transfer with translocation of ions across the membrane. In Aliivibrio salmonicida (strain LFI1238) (Vibrio salmonicida (strain LFI1238)), this protein is Ion-translocating oxidoreductase complex subunit B.